Consider the following 153-residue polypeptide: Large ribosomal subunit protein uL22 (153 aa).

The interval 110 to 153 (ITVIVESRPPKQKGASAASARSRRAQGSKAAATKKSAETKEGSE) is disordered. The span at 144 to 153 (KSAETKEGSE) shows a compositional bias: basic and acidic residues.

Belongs to the universal ribosomal protein uL22 family. In terms of assembly, part of the 50S ribosomal subunit.

In terms of biological role, this protein binds specifically to 23S rRNA; its binding is stimulated by other ribosomal proteins, e.g. L4, L17, and L20. It is important during the early stages of 50S assembly. It makes multiple contacts with different domains of the 23S rRNA in the assembled 50S subunit and ribosome. The globular domain of the protein is located near the polypeptide exit tunnel on the outside of the subunit, while an extended beta-hairpin is found that lines the wall of the exit tunnel in the center of the 70S ribosome. The chain is Large ribosomal subunit protein uL22 from Mycolicibacterium smegmatis (strain ATCC 700084 / mc(2)155) (Mycobacterium smegmatis).